A 142-amino-acid polypeptide reads, in one-letter code: Large ribosomal subunit protein mL42 (142 aa).

The transit peptide at 1-32 directs the protein to the mitochondrion; it reads MALAAVKWAISSRTMLKHLFPVENGALYCVGH.

Belongs to the mitochondrion-specific ribosomal protein mL42 family. Component of the mitochondrial ribosome large subunit (39S) which comprises a 16S rRNA and about 50 distinct proteins. Component of the mitochondrial ribosome small subunit (28S) which comprises a 12S rRNA and about 30 distinct proteins.

It is found in the mitochondrion. In Bos taurus (Bovine), this protein is Large ribosomal subunit protein mL42 (MRPL42).